The chain runs to 517 residues: Serine hydroxymethyltransferase 1, mitochondrial (517 aa).

Residues 1-30 constitute a mitochondrion transit peptide; that stretch reads MAMAMALRRLSSSIDKPIRPLIRSTSCYMS. Lys-286 is modified (N6-(pyridoxal phosphate)lysine).

It belongs to the SHMT family. Homotetramer. Interacts with GLU1. Interacts with UBP16. The cofactor is pyridoxal 5'-phosphate. Post-translationally, ubiquitinated. As to expression, ubiquitous. Mostly expressed in leaves, less abundant in stems, flowers and siliques, and barely detectable in roots.

It localises to the mitochondrion. The protein localises to the cytoplasm. The catalysed reaction is (6R)-5,10-methylene-5,6,7,8-tetrahydrofolate + glycine + H2O = (6S)-5,6,7,8-tetrahydrofolate + L-serine. It functions in the pathway one-carbon metabolism; tetrahydrofolate interconversion. In terms of biological role, functions in the photorespiratory pathway in catalyzing the interconversion of serine and glycine. Involved in controlling cell damage caused by abiotic stress, such as high light and salt and the hypersensitive defense response of plants. The protein is Serine hydroxymethyltransferase 1, mitochondrial of Arabidopsis thaliana (Mouse-ear cress).